The primary structure comprises 101 residues: DNA-binding protein Fis (101 aa).

Positions 77–96 (QTRAANMLGINRGTLRKKLK) form a DNA-binding region, H-T-H motif.

It belongs to the transcriptional regulatory Fis family. As to quaternary structure, homodimer.

Functionally, activates ribosomal RNA transcription. Plays a direct role in upstream activation of rRNA promoters. In Shewanella baltica (strain OS223), this protein is DNA-binding protein Fis.